We begin with the raw amino-acid sequence, 200 residues long: Small ribosomal subunit protein uS4 (200 aa).

The interval 22–42 is disordered; sequence TGKELEKRPYAPGPHGPNQRK. One can recognise an S4 RNA-binding domain in the interval 92–152; sequence ARLDNLVYRM…EKSNSLVVVK (61 aa).

This sequence belongs to the universal ribosomal protein uS4 family. As to quaternary structure, part of the 30S ribosomal subunit. Contacts protein S5. The interaction surface between S4 and S5 is involved in control of translational fidelity.

In terms of biological role, one of the primary rRNA binding proteins, it binds directly to 16S rRNA where it nucleates assembly of the body of the 30S subunit. Functionally, with S5 and S12 plays an important role in translational accuracy. The sequence is that of Small ribosomal subunit protein uS4 from Bacillus mycoides (strain KBAB4) (Bacillus weihenstephanensis).